The chain runs to 299 residues: NEDD8-activating enzyme E1 catalytic subunit (299 aa).

Position 12 to 37 (12 to 37) interacts with ATP; sequence GLGCEILKNLTMLSFVKQVHIVDIDT. The Glycyl thioester intermediate role is filled by cysteine 168.

Belongs to the ubiquitin-activating E1 family. UBA3 subfamily. In terms of assembly, heterodimer of UBA3 and ULA1. Interacts with NEDD8 and UBC12.

It carries out the reaction ATP + [NEDD8 protein] + [E1 NEDD8-activating enzyme]-L-cysteine = AMP + diphosphate + [E1 NEDD8-activating enzyme]-S-[NEDD8 protein]-yl-L-cysteine.. The protein operates within protein modification; protein neddylation. Functionally, catalytic subunit of the dimeric UBA3-ULA1 E1 enzyme. E1 activates NEDD8/RUB1 by first adenylating its C-terminal glycine residue with ATP, thereafter linking this residue to the side chain of the catalytic cysteine, yielding a NEDD8-UBA3 thioester and free AMP. E1 finally transfers NEDD8 to the catalytic cysteine of UBC12. This chain is NEDD8-activating enzyme E1 catalytic subunit (UBA3), found in Saccharomyces cerevisiae (strain ATCC 204508 / S288c) (Baker's yeast).